Consider the following 505-residue polypeptide: Nostrin (505 aa).

One can recognise an F-BAR domain in the interval 1-260 (MRDPLTDCSY…AISKIDIEKD (260 aa)). Coiled coils occupy residues 101–128 (AHQV…LVIS), 160–222 (ITTE…RIQL), and 295–332 (KERQ…AYSS). Serine 114 carries the post-translational modification Phosphoserine. In terms of domain architecture, REM-1 spans 292–372 (AMSKERQTSS…SYKLSSVLAE (81 aa)). Residues 437–496 (LGNGLCKALYPFQARQDDELDLEKGDIVTIHKKKDEGWWFGSLKGKKGHFPAAYVEELPL) enclose the SH3 domain. The residue at position 478 (serine 478) is a Phosphoserine.

In terms of assembly, homotrimer. Interacts with DAB2. Interacts with NOS3, DNM2, WASL and CAV1. Interacts (via SH3 domain) with DNM2; this interaction allows the recruitment of NOS3 to dynamin-positive structures. As to expression, present in pulmonary arterial endothelial cells (at protein level).

It is found in the cell membrane. It localises to the cytoplasmic vesicle. Its subcellular location is the cytoplasm. The protein localises to the cytoskeleton. In terms of biological role, multivalent adapter protein which may decrease NOS3 activity by inducing its translocation away from the plasma membrane. The sequence is that of Nostrin from Bos taurus (Bovine).